The sequence spans 394 residues: Ketoisovalerate oxidoreductase subunit VorA (394 aa).

As to quaternary structure, heterotetramer of one alpha, one beta, one delta and one gamma chain.

The enzyme catalyses 3-methyl-2-oxobutanoate + 2 oxidized [2Fe-2S]-[ferredoxin] + CoA = 2-methylpropanoyl-CoA + 2 reduced [2Fe-2S]-[ferredoxin] + CO2 + H(+). This chain is Ketoisovalerate oxidoreductase subunit VorA (vorA), found in Pyrococcus furiosus (strain ATCC 43587 / DSM 3638 / JCM 8422 / Vc1).